A 364-amino-acid chain; its full sequence is MTVNLLDFDGESLTAWFAEQGEKPFRAKQVLRWIHRSGVADFDAMTDIAKSLREKLKAKAVVAPPAVVSDKLSDDGTRKFLIDVGNGNAVETVFIPEDDRGTLCISTQAGCALDCAFCSTGKQGFNRNLSVAEIIGQLWQANHALGAVHGDERVISNVVLMGMGEPLANFENSVAALKLMLDDNAYGLSRRRITVSTSGLVPVMDRLGDECPVALAVSLHAPNDKLRDQLVPINQKYPLKELMAACQRYLEKAPRDFITFEYIMLDGINDTDAHARELLALVKSVHCKFNLIPFNPFPGSPFRRSPAERVRHFADILMQAGIVTTTRKTRGDDIDAACGQLAGQVQDKTKRTTGRVIPLKEARS.

The Proton acceptor role is filled by glutamate 91. A Radical SAM core domain is found at 97-333 (EDDRGTLCIS…TTTRKTRGDD (237 aa)). Cysteine 104 and cysteine 338 are joined by a disulfide. [4Fe-4S] cluster is bound by residues cysteine 111, cysteine 115, and cysteine 118. S-adenosyl-L-methionine contacts are provided by residues 164–165 (GE), serine 196, 218–220 (SLH), and asparagine 295. The active-site S-methylcysteine intermediate is cysteine 338.

This sequence belongs to the radical SAM superfamily. RlmN family. It depends on [4Fe-4S] cluster as a cofactor.

The protein localises to the cytoplasm. It carries out the reaction adenosine(2503) in 23S rRNA + 2 reduced [2Fe-2S]-[ferredoxin] + 2 S-adenosyl-L-methionine = 2-methyladenosine(2503) in 23S rRNA + 5'-deoxyadenosine + L-methionine + 2 oxidized [2Fe-2S]-[ferredoxin] + S-adenosyl-L-homocysteine. The enzyme catalyses adenosine(37) in tRNA + 2 reduced [2Fe-2S]-[ferredoxin] + 2 S-adenosyl-L-methionine = 2-methyladenosine(37) in tRNA + 5'-deoxyadenosine + L-methionine + 2 oxidized [2Fe-2S]-[ferredoxin] + S-adenosyl-L-homocysteine. Functionally, specifically methylates position 2 of adenine 2503 in 23S rRNA and position 2 of adenine 37 in tRNAs. m2A2503 modification seems to play a crucial role in the proofreading step occurring at the peptidyl transferase center and thus would serve to optimize ribosomal fidelity. The chain is Dual-specificity RNA methyltransferase RlmN from Dechloromonas aromatica (strain RCB).